We begin with the raw amino-acid sequence, 597 residues long: Adenine deaminase 2 (597 aa).

This sequence belongs to the metallo-dependent hydrolases superfamily. Adenine deaminase family. Requires Mn(2+) as cofactor.

It catalyses the reaction adenine + H2O + H(+) = hypoxanthine + NH4(+). The polypeptide is Adenine deaminase 2 (Agrobacterium fabrum (strain C58 / ATCC 33970) (Agrobacterium tumefaciens (strain C58))).